Consider the following 429-residue polypeptide: 3-phosphoshikimate 1-carboxyvinyltransferase (429 aa).

Residues K23, S24, and R28 each coordinate 3-phosphoshikimate. Phosphoenolpyruvate is bound at residue K23. Residues G95 and R123 each contribute to the phosphoenolpyruvate site. 4 residues coordinate 3-phosphoshikimate: S168, Q170, D316, and K343. Phosphoenolpyruvate is bound at residue Q170. D316 (proton acceptor) is an active-site residue. Positions 347 and 389 each coordinate phosphoenolpyruvate.

Belongs to the EPSP synthase family. As to quaternary structure, monomer.

It is found in the cytoplasm. The enzyme catalyses 3-phosphoshikimate + phosphoenolpyruvate = 5-O-(1-carboxyvinyl)-3-phosphoshikimate + phosphate. Its pathway is metabolic intermediate biosynthesis; chorismate biosynthesis; chorismate from D-erythrose 4-phosphate and phosphoenolpyruvate: step 6/7. Its function is as follows. Catalyzes the transfer of the enolpyruvyl moiety of phosphoenolpyruvate (PEP) to the 5-hydroxyl of shikimate-3-phosphate (S3P) to produce enolpyruvyl shikimate-3-phosphate and inorganic phosphate. This chain is 3-phosphoshikimate 1-carboxyvinyltransferase, found in Bacillus cereus (strain B4264).